The following is a 55-amino-acid chain: Large ribosomal subunit protein bL33 (55 aa).

Belongs to the bacterial ribosomal protein bL33 family.

The sequence is that of Large ribosomal subunit protein bL33 from Kocuria rhizophila (strain ATCC 9341 / DSM 348 / NBRC 103217 / DC2201).